Reading from the N-terminus, the 228-residue chain is Ribonuclease 3 (228 aa).

Residues Lys5–Gly127 enclose the RNase III domain. Glu40 contributes to the Mg(2+) binding site. Asp44 is a catalytic residue. The Mg(2+) site is built by Asp113 and Glu116. Residue Glu116 is part of the active site. The 71-residue stretch at Asp154–Asp224 folds into the DRBM domain. The interval Ala200–Arg228 is disordered. The segment covering Met218–Arg228 has biased composition (basic and acidic residues).

Belongs to the ribonuclease III family. As to quaternary structure, homodimer. Mg(2+) is required as a cofactor.

The protein resides in the cytoplasm. The catalysed reaction is Endonucleolytic cleavage to 5'-phosphomonoester.. In terms of biological role, digests double-stranded RNA. Involved in the processing of primary rRNA transcript to yield the immediate precursors to the large and small rRNAs (23S and 16S). Processes some mRNAs, and tRNAs when they are encoded in the rRNA operon. Processes pre-crRNA and tracrRNA of type II CRISPR loci if present in the organism. The chain is Ribonuclease 3 from Alkalilimnicola ehrlichii (strain ATCC BAA-1101 / DSM 17681 / MLHE-1).